We begin with the raw amino-acid sequence, 288 residues long: Large ribosomal subunit protein uL2 (288 aa).

Residues 29–43 (PEKSLTRGFKRDKGR) are compositionally biased toward basic and acidic residues. 2 disordered regions span residues 29–59 (PEKSLTRGFKRDKGRNNRGVITSRRRGGGHK) and 210–288 (GRNR…GRQS). 2 stretches are compositionally biased toward basic residues: residues 210-221 (GRNRWKGRRPKV) and 272-288 (VRRRKKSSKRGRGGRQS).

It belongs to the universal ribosomal protein uL2 family. Part of the 50S ribosomal subunit. Forms a bridge to the 30S subunit in the 70S ribosome.

Its function is as follows. One of the primary rRNA binding proteins. Required for association of the 30S and 50S subunits to form the 70S ribosome, for tRNA binding and peptide bond formation. It has been suggested to have peptidyltransferase activity; this is somewhat controversial. Makes several contacts with the 16S rRNA in the 70S ribosome. In Thermosynechococcus vestitus (strain NIES-2133 / IAM M-273 / BP-1), this protein is Large ribosomal subunit protein uL2.